The chain runs to 133 residues: Small ribosomal subunit protein uS8 (133 aa).

This sequence belongs to the universal ribosomal protein uS8 family. As to quaternary structure, part of the 30S ribosomal subunit. Contacts proteins S5 and S12.

One of the primary rRNA binding proteins, it binds directly to 16S rRNA central domain where it helps coordinate assembly of the platform of the 30S subunit. The sequence is that of Small ribosomal subunit protein uS8 from Mycoplasmoides gallisepticum (strain R(low / passage 15 / clone 2)) (Mycoplasma gallisepticum).